Here is a 295-residue protein sequence, read N- to C-terminus: Ent-pimara-9(11),15-diene synthase (295 aa).

This sequence belongs to the terpene synthase family. As to quaternary structure, monomer. A divalent metal cation is required as a cofactor.

It carries out the reaction ent-copalyl diphosphate = ent-pimara-9(11),15-diene + diphosphate. The protein operates within antibiotic biosynthesis. Functionally, involved in viguiepinol biosynthesis. Catalyzes the conversion of copalyl diphosphate (ent-CDP) into pimara-9(11),15-diene (PMD). The protein is Ent-pimara-9(11),15-diene synthase of Streptomyces sp. (strain KO-3988).